We begin with the raw amino-acid sequence, 1412 residues long: DNA-directed RNA polymerase subunit beta' (1412 aa).

The Mg(2+) site is built by D543, D545, and D547. Zn(2+) contacts are provided by C1017, C1092, C1099, and C1102.

The protein belongs to the RNA polymerase beta' chain family. The RNAP catalytic core consists of 2 alpha, 1 beta, 1 beta' and 1 omega subunit. When a sigma factor is associated with the core the holoenzyme is formed, which can initiate transcription. The cofactor is Mg(2+). It depends on Zn(2+) as a cofactor.

The catalysed reaction is RNA(n) + a ribonucleoside 5'-triphosphate = RNA(n+1) + diphosphate. Its function is as follows. DNA-dependent RNA polymerase catalyzes the transcription of DNA into RNA using the four ribonucleoside triphosphates as substrates. This chain is DNA-directed RNA polymerase subunit beta', found in Mesomycoplasma hyopneumoniae (strain 7448) (Mycoplasma hyopneumoniae).